Reading from the N-terminus, the 481-residue chain is MQAKLTKNEFIERLKTSEGKQFNVDLWYGFQCFDYANAGWKVLFGLLLKGLGAKDIPFANNFDGLATVYQNTPDFLAQPGDMVVFGSNYGAGYGHVAWVIEATLDYIIVYEQNWLGGGWTDGIEQPAGVGKKLQDDNMLMISLCGLSVRILKVRQRHDQFNLLHKHPKKETAKPQPKAVELKIIKDVVKGYDLPKRGSNPKGIVIHNDAGSKGATAEAYRNGLVNAPLSRLEAGIAHSYVSGNTVWQALDESQVGWHTANQIGNKYYYGIEVCQSMGADNATFLKNEQATFQECARLLKKWGLPANRNTIRLHNEFTSTSCPHRSSVLHTGFDPVTRGLLPEDKRLQLKDYFIKQIRAYMDGKIPVATVSNESSASSNTVKPVASAWKRNKYGTYYMEESARFTNGNQPITVRKVGPFLSCPVGYQFQPGGYCDYTEVMLQDGHVWVGYTWEGQRYYLPIRTWNGSAPPNQILGDLWGEIS.

The 136-residue stretch at 7-142 (KNEFIERLKT…LQDDNMLMIS (136 aa)) folds into the Peptidase C51 domain. The 126-residue stretch at 198–323 (SNPKGIVIHN…NEFTSTSCPH (126 aa)) folds into the N-acetylmuramoyl-L-alanine amidase domain. In terms of domain architecture, SH3b spans 398 to 466 (EESARFTNGN…YLPIRTWNGS (69 aa)).

It belongs to the N-acetylmuramoyl-L-alanine amidase 2 family.

Its subcellular location is the secreted. It catalyses the reaction Hydrolyzes the link between N-acetylmuramoyl residues and L-amino acid residues in certain cell-wall glycopeptides.. Its function is as follows. Autolysins are involved in some important biological processes such as cell separation, cell-wall turnover, competence for genetic transformation, formation of the flagella and sporulation. Autolysin strictly depends on the presence of choline-containing cell walls for activity. The sequence is that of Autolysin (lytA) from Staphylococcus aureus.